The following is a 275-amino-acid chain: Hydroxyethylthiazole kinase (275 aa).

Residue Met50 participates in substrate binding. The ATP site is built by Arg126 and Ser171. Residue Ala200 coordinates substrate.

It belongs to the Thz kinase family. Requires Mg(2+) as cofactor.

It carries out the reaction 5-(2-hydroxyethyl)-4-methylthiazole + ATP = 4-methyl-5-(2-phosphooxyethyl)-thiazole + ADP + H(+). The protein operates within cofactor biosynthesis; thiamine diphosphate biosynthesis; 4-methyl-5-(2-phosphoethyl)-thiazole from 5-(2-hydroxyethyl)-4-methylthiazole: step 1/1. Its function is as follows. Catalyzes the phosphorylation of the hydroxyl group of 4-methyl-5-beta-hydroxyethylthiazole (THZ). The sequence is that of Hydroxyethylthiazole kinase from Acinetobacter baumannii (strain ATCC 17978 / DSM 105126 / CIP 53.77 / LMG 1025 / NCDC KC755 / 5377).